The primary structure comprises 287 residues: 4-hydroxybenzoate octaprenyltransferase (287 aa).

Transmembrane regions (helical) follow at residues I23 to A43, G46 to I66, L99 to I119, L141 to V161, G162 to A182, L213 to N233, G237 to I257, and F266 to A286.

This sequence belongs to the UbiA prenyltransferase family. It depends on Mg(2+) as a cofactor.

It is found in the cell inner membrane. It carries out the reaction all-trans-octaprenyl diphosphate + 4-hydroxybenzoate = 4-hydroxy-3-(all-trans-octaprenyl)benzoate + diphosphate. The protein operates within cofactor biosynthesis; ubiquinone biosynthesis. Functionally, catalyzes the prenylation of para-hydroxybenzoate (PHB) with an all-trans polyprenyl group. Mediates the second step in the final reaction sequence of ubiquinone-8 (UQ-8) biosynthesis, which is the condensation of the polyisoprenoid side chain with PHB, generating the first membrane-bound Q intermediate 3-octaprenyl-4-hydroxybenzoate. The protein is 4-hydroxybenzoate octaprenyltransferase of Edwardsiella ictaluri (strain 93-146).